The primary structure comprises 142 residues: Acidic phospholipase A2 PA4 (142 aa).

W10, G12, and G14 together coordinate Ca(2+). Cystine bridges form between C11/C33, C32/C72, and C39/C65. H36 is an active-site residue. D37 lines the Ca(2+) pocket.

The protein belongs to the phospholipase A2 family. Group III subfamily. The cofactor is Ca(2+). In terms of tissue distribution, expressed by the venom gland.

Its subcellular location is the secreted. The enzyme catalyses a 1,2-diacyl-sn-glycero-3-phosphocholine + H2O = a 1-acyl-sn-glycero-3-phosphocholine + a fatty acid + H(+). Its function is as follows. PLA2 catalyzes the calcium-dependent hydrolysis of the 2-acyl groups in 3-sn-phosphoglycerides. This Heloderma suspectum (Gila monster) protein is Acidic phospholipase A2 PA4.